The chain runs to 64 residues: U-myrmeciitoxin(01)-Mg4b (64 aa).

Residues 1 to 25 form the signal peptide; sequence MGKIFFFVLMIAIIGSTFLIEEALG.

It belongs to the ant myrmeciitoxin-01 family. As to quaternary structure, homodimer; disulfide-linked. Post-translationally, contains 2 intrachain disulfide bonds (per chain) and 1 interchain disulfide bond. Expressed by the venom gland.

Its subcellular location is the secreted. Its function is as follows. May have antimicrobial properties, like most ant linear peptides. In Myrmecia gulosa (Red bulldog ant), this protein is U-myrmeciitoxin(01)-Mg4b.